We begin with the raw amino-acid sequence, 143 residues long: Large ribosomal subunit protein uL11 (143 aa).

The protein belongs to the universal ribosomal protein uL11 family. As to quaternary structure, part of the ribosomal stalk of the 50S ribosomal subunit. Interacts with L10 and the large rRNA to form the base of the stalk. L10 forms an elongated spine to which L12 dimers bind in a sequential fashion forming a multimeric L10(L12)X complex. In terms of processing, one or more lysine residues are methylated.

In terms of biological role, forms part of the ribosomal stalk which helps the ribosome interact with GTP-bound translation factors. The chain is Large ribosomal subunit protein uL11 from Psychrobacter sp. (strain PRwf-1).